The chain runs to 524 residues: MTACSTAIRAQQLLLPVLSALGLLAAGAPQPPNIVLLLMDDMGWGDLGVYGEPSRETPNLDRMAAEGMLFPSFYSANPLCSPSRAALLTGRLPIRNGFYTTNAHARNAYTPQEIMGGIPNSEHLLPELLKKAGYTNKIVGKWHLGHRPQFHPLKHGFDEWFGSPNCHFGPYDNKVKPNIPVYRDWEMVGRFYEEFPINLKTGEANLTQLYLQEALDFIRTQHARQSPFFLYWAIDATHAPVYASKQFLGTSLRGRYGDAVREIDDSVGKILSLLQNLGISKNTFVFFTSDNGAALISAPKEGGSNGPFLCGKQTTFEGGMREPAIAWWPGHIAAGQVSHQLGSIMDLFTTSLSLAGLKPPSDRVIDGLDLLPTMLQGHIIDRPIFYYRGNTLMAVTLGQYKAHLWTWTNSWEEFRQGIDFCPGQNVSGVTTHTQEEHTELPLIFHLGRDPGERFPLRFTSNEYQDALSRTTQVIQQHQKSLVPGQPQLNVCNQAVMNWAPPGCEKLGKCLTPPESVPEKCFWAH.

Residues 1–27 (MTACSTAIRAQQLLLPVLSALGLLAAG) form the signal peptide. Residues 28–381 (APQPPNIVLL…PTMLQGHIID (354 aa)) form a catalytic domain region. Ca(2+) contacts are provided by Asp-40, Asp-41, and Cys-80. The active-site Nucleophile is Cys-80. At Cys-80 the chain carries 3-oxoalanine (Cys). His-143 is a catalytic residue. N-linked (GlcNAc...) asparagine glycosylation occurs at Asn-205. Positions 290 and 291 each coordinate Ca(2+). A disulfide bond links Cys-310 and Cys-421. The N-linked (GlcNAc...) asparagine glycan is linked to Asn-425. 2 disulfide bridges follow: Cys-491/Cys-520 and Cys-503/Cys-509.

It belongs to the sulfatase family. Homodimer. The cofactor is Ca(2+). In terms of processing, the conversion to 3-oxoalanine (also known as C-formylglycine, FGly), of a serine or cysteine residue in prokaryotes and of a cysteine residue in eukaryotes, is critical for catalytic activity.

The protein resides in the lysosome. The catalysed reaction is Hydrolysis of the 6-sulfate groups of the N-acetyl-D-galactosamine 6-sulfate units of chondroitin sulfate and of the D-galactose 6-sulfate units of keratan sulfate.. The polypeptide is N-acetylgalactosamine-6-sulfatase (Galns) (Rattus norvegicus (Rat)).